We begin with the raw amino-acid sequence, 64 residues long: DNA gyrase inhibitor YacG (64 aa).

C9, C12, C28, and C32 together coordinate Zn(2+). A disordered region spans residues 45 to 64 (NAIAGAPDMSDSDGWSEDQY). The span at 54-64 (SDSDGWSEDQY) shows a compositional bias: acidic residues.

This sequence belongs to the DNA gyrase inhibitor YacG family. As to quaternary structure, interacts with GyrB. It depends on Zn(2+) as a cofactor.

Inhibits all the catalytic activities of DNA gyrase by preventing its interaction with DNA. Acts by binding directly to the C-terminal domain of GyrB, which probably disrupts DNA binding by the gyrase. This is DNA gyrase inhibitor YacG from Vibrio parahaemolyticus serotype O3:K6 (strain RIMD 2210633).